The primary structure comprises 120 residues: UPF0102 protein Moth_0988 (120 aa).

It belongs to the UPF0102 family.

The sequence is that of UPF0102 protein Moth_0988 from Moorella thermoacetica (strain ATCC 39073 / JCM 9320).